A 223-amino-acid chain; its full sequence is DNA mismatch repair protein MutH (223 aa).

The protein belongs to the MutH family.

The protein resides in the cytoplasm. Functionally, sequence-specific endonuclease that cleaves unmethylated GATC sequences. It is involved in DNA mismatch repair. The protein is DNA mismatch repair protein MutH of Haemophilus influenzae (strain PittGG).